Consider the following 348-residue polypeptide: Dihydroorotase (348 aa).

Zn(2+) is bound by residues His-17 and His-19. Substrate is bound by residues 19 to 21 (HLR) and Asn-45. Residues Lys-103, His-140, and His-178 each contribute to the Zn(2+) site. N6-carboxylysine is present on Lys-103. Residue His-140 coordinates substrate. Leu-223 contacts substrate. Asp-251 contacts Zn(2+). Residue Asp-251 is part of the active site. His-255 and Ala-267 together coordinate substrate.

It belongs to the metallo-dependent hydrolases superfamily. DHOase family. Class II DHOase subfamily. As to quaternary structure, homodimer. The cofactor is Zn(2+).

The catalysed reaction is (S)-dihydroorotate + H2O = N-carbamoyl-L-aspartate + H(+). It functions in the pathway pyrimidine metabolism; UMP biosynthesis via de novo pathway; (S)-dihydroorotate from bicarbonate: step 3/3. Its function is as follows. Catalyzes the reversible cyclization of carbamoyl aspartate to dihydroorotate. This is Dihydroorotase from Salmonella typhimurium (strain LT2 / SGSC1412 / ATCC 700720).